The following is a 387-amino-acid chain: Lipid-A-disaccharide synthase (387 aa).

The protein belongs to the LpxB family.

It catalyses the reaction a lipid X + a UDP-2-N,3-O-bis[(3R)-3-hydroxyacyl]-alpha-D-glucosamine = a lipid A disaccharide + UDP + H(+). Its pathway is bacterial outer membrane biogenesis; LPS lipid A biosynthesis. Functionally, condensation of UDP-2,3-diacylglucosamine and 2,3-diacylglucosamine-1-phosphate to form lipid A disaccharide, a precursor of lipid A, a phosphorylated glycolipid that anchors the lipopolysaccharide to the outer membrane of the cell. The sequence is that of Lipid-A-disaccharide synthase from Glaesserella parasuis serovar 5 (strain SH0165) (Haemophilus parasuis).